We begin with the raw amino-acid sequence, 301 residues long: UDP-N-acetylenolpyruvoylglucosamine reductase 1 (301 aa).

The FAD-binding PCMH-type domain occupies 29 to 196 (KIGGPADILI…LEAEFQLQIG (168 aa)). The active site involves Arg174. Ser225 (proton donor) is an active-site residue. Glu295 is a catalytic residue.

This sequence belongs to the MurB family. Requires FAD as cofactor.

The protein resides in the cytoplasm. It catalyses the reaction UDP-N-acetyl-alpha-D-muramate + NADP(+) = UDP-N-acetyl-3-O-(1-carboxyvinyl)-alpha-D-glucosamine + NADPH + H(+). It participates in cell wall biogenesis; peptidoglycan biosynthesis. In terms of biological role, cell wall formation. The protein is UDP-N-acetylenolpyruvoylglucosamine reductase 1 of Bacillus thuringiensis subsp. konkukian (strain 97-27).